We begin with the raw amino-acid sequence, 786 residues long: LPS-assembly protein LptD (786 aa).

The signal sequence occupies residues Met-1–Ala-39. Residues Pro-767–Glu-786 form a disordered region. Residues Thr-770–Met-779 are compositionally biased toward pro residues.

The protein belongs to the LptD family. In terms of assembly, component of the lipopolysaccharide transport and assembly complex. Interacts with LptE and LptA.

The protein resides in the cell outer membrane. Together with LptE, is involved in the assembly of lipopolysaccharide (LPS) at the surface of the outer membrane. In Burkholderia cenocepacia (strain HI2424), this protein is LPS-assembly protein LptD.